A 98-amino-acid chain; its full sequence is DNA-binding protein Fis (98 aa).

The segment at residues 74-93 (QTRAATMLGINRGTLRKKLK) is a DNA-binding region (H-T-H motif).

This sequence belongs to the transcriptional regulatory Fis family. As to quaternary structure, homodimer.

In terms of biological role, activates ribosomal RNA transcription. Plays a direct role in upstream activation of rRNA promoters. The polypeptide is DNA-binding protein Fis (Glaesserella parasuis serovar 5 (strain SH0165) (Haemophilus parasuis)).